Reading from the N-terminus, the 100-residue chain is Protein E7 (100 aa).

An E7 terminal domain region spans residues 1 to 42 (MRGAAPTVADLNLELNDLVLPANLLSEEVLQSSDDEYEITEE). A zinc finger lies at 54–91 (CYRCEVAVRITLYAAELGLRTLEQLLVEGKLTFCCTAC). Residues 72–80 (LRTLEQLLV) carry the Nuclear export signal motif.

The protein belongs to the papillomaviridae E7 protein family. Homodimer. Homooligomer. Interacts with host RB1; this interaction induces dissociation of RB1-E2F1 complex thereby disrupting RB1 activity. Interacts with host EP300; this interaction represses EP300 transcriptional activity. Interacts with protein E2; this interaction inhibits E7 oncogenic activity. Interacts with host TMEM173/STING; this interaction impairs the ability of TMEM173/STING to sense cytosolic DNA and promote the production of type I interferon (IFN-alpha and IFN-beta). Post-translationally, highly phosphorylated.

Its subcellular location is the host cytoplasm. It is found in the host nucleus. Its function is as follows. Plays a role in viral genome replication by driving entry of quiescent cells into the cell cycle. Stimulation of progression from G1 to S phase allows the virus to efficiently use the cellular DNA replicating machinery to achieve viral genome replication. E7 protein has both transforming and trans-activating activities. Induces the disassembly of the E2F1 transcription factor from RB1, with subsequent transcriptional activation of E2F1-regulated S-phase genes. Interferes with host histone deacetylation mediated by HDAC1 and HDAC2, leading to transcription activation. Also plays a role in the inhibition of both antiviral and antiproliferative functions of host interferon alpha. Interaction with host TMEM173/STING impairs the ability of TMEM173/STING to sense cytosolic DNA and promote the production of type I interferon (IFN-alpha and IFN-beta). The protein is Protein E7 of Human papillomavirus 4.